A 343-amino-acid chain; its full sequence is Dihydroorotase (343 aa).

Zn(2+) is bound by residues histidine 13 and histidine 15. Residues 15–17 and asparagine 41 each bind substrate; that span reads HLR. Lysine 99, histidine 136, and histidine 174 together coordinate Zn(2+). Lysine 99 carries the N6-carboxylysine modification. Residue histidine 136 participates in substrate binding. Position 219 (leucine 219) interacts with substrate. Aspartate 247 provides a ligand contact to Zn(2+). Aspartate 247 is an active-site residue. The substrate site is built by histidine 251 and alanine 263.

This sequence belongs to the metallo-dependent hydrolases superfamily. DHOase family. Class II DHOase subfamily. In terms of assembly, homodimer. The cofactor is Zn(2+).

It carries out the reaction (S)-dihydroorotate + H2O = N-carbamoyl-L-aspartate + H(+). It functions in the pathway pyrimidine metabolism; UMP biosynthesis via de novo pathway; (S)-dihydroorotate from bicarbonate: step 3/3. Catalyzes the reversible cyclization of carbamoyl aspartate to dihydroorotate. The chain is Dihydroorotase from Shewanella baltica (strain OS195).